Here is a 155-residue protein sequence, read N- to C-terminus: Small ribosomal subunit protein uS7 (155 aa).

Belongs to the universal ribosomal protein uS7 family. Part of the 30S ribosomal subunit. Contacts proteins S9 and S11.

In terms of biological role, one of the primary rRNA binding proteins, it binds directly to 16S rRNA where it nucleates assembly of the head domain of the 30S subunit. Is located at the subunit interface close to the decoding center, probably blocks exit of the E-site tRNA. This Xylella fastidiosa (strain 9a5c) protein is Small ribosomal subunit protein uS7.